A 106-amino-acid polypeptide reads, in one-letter code: Iron-sulfur cluster assembly protein CyaY (106 aa).

The protein belongs to the frataxin family.

Its function is as follows. Involved in iron-sulfur (Fe-S) cluster assembly. May act as a regulator of Fe-S biogenesis. The protein is Iron-sulfur cluster assembly protein CyaY of Escherichia coli O9:H4 (strain HS).